Here is a 144-residue protein sequence, read N- to C-terminus: uncharacterized protein (144 aa).

The signal sequence occupies residues 1–23 (MVIPLRNKYGILFLIAVCIMVSG). Residues 119 to 144 (QNGQRKTMTRIESKTGREEKDEKSKS) form a disordered region. Residues 127–144 (TRIESKTGREEKDEKSKS) are compositionally biased toward basic and acidic residues.

This is an uncharacterized protein from Bacillus subtilis (strain 168).